Reading from the N-terminus, the 62-residue chain is Large ribosomal subunit protein bL28 (62 aa).

Belongs to the bacterial ribosomal protein bL28 family.

This Caldicellulosiruptor bescii (strain ATCC BAA-1888 / DSM 6725 / KCTC 15123 / Z-1320) (Anaerocellum thermophilum) protein is Large ribosomal subunit protein bL28.